The sequence spans 416 residues: Serine hydroxymethyltransferase (416 aa).

(6S)-5,6,7,8-tetrahydrofolate is bound by residues leucine 119 and 123-125; that span reads GHL. At lysine 228 the chain carries N6-(pyridoxal phosphate)lysine.

This sequence belongs to the SHMT family. As to quaternary structure, homodimer. Pyridoxal 5'-phosphate serves as cofactor.

The protein localises to the cytoplasm. It catalyses the reaction (6R)-5,10-methylene-5,6,7,8-tetrahydrofolate + glycine + H2O = (6S)-5,6,7,8-tetrahydrofolate + L-serine. Its pathway is one-carbon metabolism; tetrahydrofolate interconversion. It functions in the pathway amino-acid biosynthesis; glycine biosynthesis; glycine from L-serine: step 1/1. Its function is as follows. Catalyzes the reversible interconversion of serine and glycine with tetrahydrofolate (THF) serving as the one-carbon carrier. This reaction serves as the major source of one-carbon groups required for the biosynthesis of purines, thymidylate, methionine, and other important biomolecules. Also exhibits THF-independent aldolase activity toward beta-hydroxyamino acids, producing glycine and aldehydes, via a retro-aldol mechanism. This chain is Serine hydroxymethyltransferase, found in Moorella thermoacetica (strain ATCC 39073 / JCM 9320).